The sequence spans 251 residues: Flagellar L-ring protein (251 aa).

A signal peptide spans 1–17; it reads MIRKLAALIVAAAALQA. Residue cysteine 18 is the site of N-palmitoyl cysteine attachment. A lipid anchor (S-diacylglycerol cysteine) is attached at cysteine 18.

Belongs to the FlgH family. As to quaternary structure, the basal body constitutes a major portion of the flagellar organelle and consists of four rings (L,P,S, and M) mounted on a central rod.

It is found in the cell outer membrane. The protein localises to the bacterial flagellum basal body. Assembles around the rod to form the L-ring and probably protects the motor/basal body from shearing forces during rotation. The sequence is that of Flagellar L-ring protein from Maricaulis maris (strain MCS10) (Caulobacter maris).